The following is a 456-amino-acid chain: MINDDTIVAPATAPGEGGIGIVRLSGSGAEKLLLKFFSPRRFCERLDSHFLYYGKFTDETGKIVDEVMAVIMRKPRSYTREDVVEIHCHGGGLLVRSIIDVFLAAGARLARPGEFTLRAFLNGRIDLTQAEAVIDLIRSRSNLASDVALSQLEGRLAQQIGVFGQVIADLLAQVEAAIDFPEEDIELDDQQMLGASAGALIADMDRIIDTFESGRVLREGLRVLIFGKPNVGKSSLMNGLLGEARAIVTDIPGTTRDTIEEDLVLGGLPLRIVDTAGIRNTLDPVEEEGVRRARSKVESADLVLLVIDGSQEMGEDDLLALEFCRNREVLVVINKCDLATLPISSALDGLPYVRTSVLEKNGLDGLVSAIQERFVHNAHVAENRETVVLTQRRHRQALVKARQSLGRFRETLVQGMSPEFGAVELRDALDAVGEITGETTPDDILERIFTRFCIGK.

3 residues coordinate (6S)-5-formyl-5,6,7,8-tetrahydrofolate: R23, E85, and R124. A TrmE-type G domain is found at 220–375 (GLRVLIFGKP…LVSAIQERFV (156 aa)). N230 contributes to the K(+) binding site. GTP contacts are provided by residues 230-235 (NVGKSS), 249-255 (TDIPGTT), and 274-277 (DTAG). Residue S234 participates in Mg(2+) binding. K(+)-binding residues include T249, I251, and T254. T255 contacts Mg(2+). A (6S)-5-formyl-5,6,7,8-tetrahydrofolate-binding site is contributed by K456.

The protein belongs to the TRAFAC class TrmE-Era-EngA-EngB-Septin-like GTPase superfamily. TrmE GTPase family. As to quaternary structure, homodimer. Heterotetramer of two MnmE and two MnmG subunits. It depends on K(+) as a cofactor.

The protein localises to the cytoplasm. Exhibits a very high intrinsic GTPase hydrolysis rate. Involved in the addition of a carboxymethylaminomethyl (cmnm) group at the wobble position (U34) of certain tRNAs, forming tRNA-cmnm(5)s(2)U34. This is tRNA modification GTPase MnmE from Syntrophotalea carbinolica (strain DSM 2380 / NBRC 103641 / GraBd1) (Pelobacter carbinolicus).